A 957-amino-acid chain; its full sequence is MSNYIVEKIYNPKNIEEPIYKFWEYGDYFSPHGNTSQESYCIMMPPPNITGQLHLGHAFQQTIMDVLIRYQRMQGKNTLWQTGTDHAGIATQMLVEHKIYNNTGKTRHDYTRDELIKNIWAWKSQSEQFITYQMKRLGNSVDWKRQRFTMDTEMSYAVTEAFIRLYRKNLIYRGKRLVNWDCKLQTAISDLEVINKKTKGSIWYIYYKLDNATISSNSHHLIVATTRPETMLGDTAVAVHPEDTRYKNYIGQYVIAPITNRRIPIISDKNVDMFKGTGCLKITPAHDFNDYIIGKRHGLPMINIFSLNGKILKKLEVFNSSGQLTDQLYCKIPQIFHNLDSDNARKKIISECNALKLLHNIEPHDLTIPYSDRTGTIIEPMLTDQWYIRVKHLTQHAIDAVNLNIINFVPKQYKNMYFSWMNNLQDWCISRQIWWGHKIPAWYDDNNTIYVGYCEKDIRIKNKLNNNVILHREKDVLDTWFSSSLWTFAALGWPKNTNLLNVFHPTNIIISGFDIIFFWIARMIMLTMHFIKNDNGSAQIPFKTVYITGLIRDELGQKMSKSKGNIIDPIDIIDGISIENLLKKRTKNMLQPQLSKHIINNTIKQFPNGIKPHGTDALRFTLVALASSGRDIHWDMQRLTGYRNFCNKLWHASRFVLMHTKNQDCGISININEKSFSLADRWIITKFHQTVQIFHKKLEIYRFDEIANILHEFIWHQFCDWYLELTKPILYHGNALELRGTRYTLITLLESLLRLTHPIIPFITEKIWQEVKTVTGNNGTTIMLQPFPKYDESVIDMKSVIDIEWIKNAVLAIRTARVNMNISYNIPLQIVFRDTSSEVKKRITENSKILCHIAQLKSIHFISKGTIYPKSMTMPLDSSELLIRIPDTFNKENEINRLKKESELINRKIETIQKLLDDNNFINQAPKSVIKDKQALLNYYELIQNKLIDQCAIMKKL.

The 'HIGH' region signature appears at 47–57; that stretch reads PNITGQLHLGH. Positions 558-562 match the 'KMSKS' region motif; that stretch reads KMSKS. Lysine 561 provides a ligand contact to ATP. The stretch at 889 to 918 forms a coiled coil; it reads FNKENEINRLKKESELINRKIETIQKLLDD.

This sequence belongs to the class-I aminoacyl-tRNA synthetase family. ValS type 1 subfamily. In terms of assembly, monomer.

Its subcellular location is the cytoplasm. The catalysed reaction is tRNA(Val) + L-valine + ATP = L-valyl-tRNA(Val) + AMP + diphosphate. Its function is as follows. Catalyzes the attachment of valine to tRNA(Val). As ValRS can inadvertently accommodate and process structurally similar amino acids such as threonine, to avoid such errors, it has a 'posttransfer' editing activity that hydrolyzes mischarged Thr-tRNA(Val) in a tRNA-dependent manner. The protein is Valine--tRNA ligase of Blochmanniella pennsylvanica (strain BPEN).